Here is a 308-residue protein sequence, read N- to C-terminus: Aspartate carbamoyltransferase catalytic subunit (308 aa).

2 residues coordinate carbamoyl phosphate: Arg-51 and Thr-52. Lys-79 contacts L-aspartate. Carbamoyl phosphate-binding residues include Arg-101, His-130, and Gln-133. The L-aspartate site is built by Arg-163 and Arg-215. Positions 258 and 259 each coordinate carbamoyl phosphate.

It belongs to the aspartate/ornithine carbamoyltransferase superfamily. ATCase family. As to quaternary structure, heterododecamer (2C3:3R2) of six catalytic PyrB chains organized as two trimers (C3), and six regulatory PyrI chains organized as three dimers (R2).

The enzyme catalyses carbamoyl phosphate + L-aspartate = N-carbamoyl-L-aspartate + phosphate + H(+). It participates in pyrimidine metabolism; UMP biosynthesis via de novo pathway; (S)-dihydroorotate from bicarbonate: step 2/3. Its function is as follows. Catalyzes the condensation of carbamoyl phosphate and aspartate to form carbamoyl aspartate and inorganic phosphate, the committed step in the de novo pyrimidine nucleotide biosynthesis pathway. The chain is Aspartate carbamoyltransferase catalytic subunit from Pediococcus pentosaceus (strain ATCC 25745 / CCUG 21536 / LMG 10740 / 183-1w).